We begin with the raw amino-acid sequence, 139 residues long: Large ribosomal subunit protein bL17 (139 aa).

The tract at residues glutamate 120–alanine 139 is disordered.

In terms of assembly, part of the 50S ribosomal subunit. Contacts protein L32. May be methylated thrice, on undetermined residues.

The sequence is that of Large ribosomal subunit protein bL17 from Rhodopseudomonas palustris (strain ATCC BAA-98 / CGA009).